Reading from the N-terminus, the 620-residue chain is Dopamine beta-hydroxylase (620 aa).

The Cytoplasmic portion of the chain corresponds to 1–19; it reads MQPHLSHQPCWSLPSPSVR. The helical; Signal-anchor for type II membrane protein transmembrane segment at 20-40 threads the bilayer; that stretch reads EAASMYGTAVAIFLVILVAAL. Residues 41 to 620 are Intragranular-facing; that stretch reads QGSEPPESPF…FVVITHGGRH (580 aa). Residues 60–176 enclose the DOMON domain; sequence GTLELSWNVS…DTVHLVYGIL (117 aa). Asn67 and Asn187 each carry an N-linked (GlcNAc...) asparagine glycan. Cystine bridges form between Cys157–Cys599, Cys235–Cys286, Cys272–Cys298, Cys393–Cys506, Cys397–Cys568, and Cys469–Cys491. The active site involves Tyr233. Cu(2+)-binding residues include His265 and His266. Asn274 is a glycosylation site (N-linked (GlcNAc...) asparagine). Residue His336 coordinates Cu(2+). Ser349 is modified (phosphoserine; by CaMK). Residue His415 is part of the active site. Residues His415 and His417 each coordinate Cu(2+). N-linked (GlcNAc...) asparagine glycosylation is present at Asn475. Position 490 (Met490) interacts with Cu(2+). N-linked (GlcNAc...) asparagine glycosylation is found at Asn569 and Asn587.

The protein belongs to the copper type II ascorbate-dependent monooxygenase family. Homotetramer; composed of two disulfide-linked dimers. The cofactor is Cu(2+). Post-translationally, proteolytic cleavage after the membrane-anchor leads to the release of the soluble form. In terms of processing, N-glycosylated. Chromaffin granules of the adrenal medulla and synaptic vesicles of the sympathetic nervous system.

The protein localises to the cytoplasmic vesicle. The protein resides in the secretory vesicle lumen. It is found in the secretory vesicle. Its subcellular location is the chromaffin granule lumen. It localises to the secreted. The protein localises to the secretory vesicle membrane. The protein resides in the chromaffin granule membrane. The catalysed reaction is dopamine + 2 L-ascorbate + O2 = (R)-noradrenaline + 2 monodehydro-L-ascorbate radical + H2O. Its pathway is catecholamine biosynthesis; (R)-noradrenaline biosynthesis; (R)-noradrenaline from dopamine: step 1/1. In terms of biological role, catalyzes the hydroxylation of dopamine to noradrenaline (also known as norepinephrine), and is thus vital for regulation of these neurotransmitters. The polypeptide is Dopamine beta-hydroxylase (Dbh) (Rattus norvegicus (Rat)).